Consider the following 447-residue polypeptide: Argininosuccinate synthase (447 aa).

ATP is bound by residues 17–25 (AFSGGLDTS) and Ala-43. Tyr-99 serves as a coordination point for L-citrulline. ATP contacts are provided by Gly-129 and Thr-131. L-aspartate-binding residues include Thr-131, Asn-135, and Asp-136. Asn-135 serves as a coordination point for L-citrulline. Asp-136 is an ATP binding site. Positions 139 and 192 each coordinate L-citrulline. ATP is bound at residue Asp-194. 3 residues coordinate L-citrulline: Thr-201, Glu-203, and Glu-280.

The protein belongs to the argininosuccinate synthase family. Type 2 subfamily. Homotetramer.

The protein localises to the cytoplasm. The enzyme catalyses L-citrulline + L-aspartate + ATP = 2-(N(omega)-L-arginino)succinate + AMP + diphosphate + H(+). Its pathway is amino-acid biosynthesis; L-arginine biosynthesis; L-arginine from L-ornithine and carbamoyl phosphate: step 2/3. The protein is Argininosuccinate synthase of Klebsiella pneumoniae subsp. pneumoniae (strain ATCC 700721 / MGH 78578).